A 218-amino-acid chain; its full sequence is Small ribosomal subunit protein uS3 (218 aa).

One can recognise a KH type-2 domain in the interval 38–106; that stretch reads LRNDLKKKLM…PVHLNIEEVK (69 aa).

It belongs to the universal ribosomal protein uS3 family. In terms of assembly, part of the 30S ribosomal subunit. Forms a tight complex with proteins S10 and S14.

In terms of biological role, binds the lower part of the 30S subunit head. Binds mRNA in the 70S ribosome, positioning it for translation. The sequence is that of Small ribosomal subunit protein uS3 from Legionella pneumophila (strain Paris).